Consider the following 59-residue polypeptide: UPF0434 protein VC_1876 (59 aa).

This sequence belongs to the UPF0434 family.

This chain is UPF0434 protein VC_1876, found in Vibrio cholerae serotype O1 (strain ATCC 39315 / El Tor Inaba N16961).